The chain runs to 118 residues: uncharacterized protein (118 aa).

The interval 1-49 (MDYVGGSLKLKNVKKKPLKKKKKDSKKLAEKVQEHSSRDKSPLEENGVS) is disordered. Residues 11–25 (KNVKKKPLKKKKKDS) show a composition bias toward basic residues. A compositionally biased stretch (basic and acidic residues) spans 26 to 43 (KKLAEKVQEHSSRDKSPL).

This is an uncharacterized protein from Schizosaccharomyces pombe (strain 972 / ATCC 24843) (Fission yeast).